The chain runs to 497 residues: Apolipoprotein N-acyltransferase (497 aa).

6 helical membrane passes run 21–41 (FAPFYLYPIPVVTLALLALLW), 51–71 (ALTGFTFGMGLFGAGVTWLYV), 85–105 (VLALIILCAYLALFPALTGWI), 119–139 (GMVAALWALAEWLRGTLFTGF), 157–177 (FAPVIGVYGLSLLLMLSAAWL), and 189–209 (FWLGLGSVWLIGFGLQQIHWT). Residues 221–461 (LQGNIPQNMK…GLHSTAQGFG (241 aa)) form the CN hydrolase domain. Glu-259 acts as the Proton acceptor in catalysis. Lys-319 is an active-site residue. Cys-371 acts as the Nucleophile in catalysis. The chain crosses the membrane as a helical span at residues 472 to 492 (SLVFALIGLLLLAGSLAAFSG).

The protein belongs to the CN hydrolase family. Apolipoprotein N-acyltransferase subfamily.

It is found in the cell inner membrane. The enzyme catalyses N-terminal S-1,2-diacyl-sn-glyceryl-L-cysteinyl-[lipoprotein] + a glycerophospholipid = N-acyl-S-1,2-diacyl-sn-glyceryl-L-cysteinyl-[lipoprotein] + a 2-acyl-sn-glycero-3-phospholipid + H(+). It functions in the pathway protein modification; lipoprotein biosynthesis (N-acyl transfer). Its function is as follows. Catalyzes the phospholipid dependent N-acylation of the N-terminal cysteine of apolipoprotein, the last step in lipoprotein maturation. This chain is Apolipoprotein N-acyltransferase, found in Nitrosomonas europaea (strain ATCC 19718 / CIP 103999 / KCTC 2705 / NBRC 14298).